We begin with the raw amino-acid sequence, 298 residues long: Tritrans,polycis-undecaprenyl-diphosphate synthase (geranylgeranyl-diphosphate specific) (298 aa).

Asp35 is a catalytic residue. Asp35 provides a ligand contact to Mg(2+). Residues 36–39 (GNRR), Arg48, His52, and 80–82 (STE) contribute to the substrate site. The Proton acceptor role is filled by Asn83. Residues Phe84, Arg86, Arg208, and 214–216 (RIS) each bind substrate.

It belongs to the UPP synthase family. In terms of assembly, homodimer. Mg(2+) serves as cofactor.

It catalyses the reaction geranylgeranyl diphosphate + 7 isopentenyl diphosphate = tri-trans,hepta-cis-undecaprenyl diphosphate + 7 diphosphate. Its function is as follows. Catalyzes the sequential condensation of isopentenyl diphosphate (IPP) with geranylgeranyl diphosphate (GGPP) to yield (2Z,6Z,10Z,14Z,18Z,22Z,26Z,30E,34E,38E)-undecaprenyl diphosphate (tritrans,heptacis-UPP). It is probably the precursor of glycosyl carrier lipids. This Methanosarcina mazei (strain ATCC BAA-159 / DSM 3647 / Goe1 / Go1 / JCM 11833 / OCM 88) (Methanosarcina frisia) protein is Tritrans,polycis-undecaprenyl-diphosphate synthase (geranylgeranyl-diphosphate specific).